A 736-amino-acid chain; its full sequence is MEGEAVEAIVEESETFIKGKERKTYQRRREGGQEEDACHLPQNQTDGGEVVQDVNSSVQMVMMEQLDPTLLQMKTEVMEGTVAPEAEAAVDDTQIITLQVVNMEEQPINIGELQLVQVPVPVTVPVATTSVEELQGAYENEVSKEGLAESEPMICHTLPLPEGFQVVKVGANGEVETLEQGELPPQEDSSWQKDPDYQPPAKKTKKTKKSKLRYTEEGKDVDVSVYDFEEEQQEGLLSEVNAEKVVGNMKPPKPTKIKKKGVKKTFQCELCSYTCPRRSNLDRHMKSHTDERPHKCHLCGRAFRTVTLLRNHLNTHTGTRPHKCPDCDMAFVTSGELVRHRRYKHTHEKPFKCSMCDYASVEVSKLKRHIRSHTGERPFQCSLCSYASRDTYKLKRHMRTHSGEKPYECYICHARFTQSGTMKMHILQKHTENVAKFHCPHCDTVIARKSDLGVHLRKQHSYIEQGKKCRYCDAVFHERYALIQHQKSHKNEKRFKCDQCDYACRQERHMIMHKRTHTGEKPYACSHCDKTFRQKQLLDMHFKRYHDPNFVPAAFVCSKCGKTFTRRNTMARHADNCAGPDGVEGENGGETKKSKRGRKRKMRSKKEDSSDSEENAEPDLDDNEEEEEPAVEIEPEPEPQPQPPPPPQPVAPAPPPAKKRRGRPPGRTNQPKQNQPTAIIQVEDQNTGAIENIIVEVKKEPDAEPAEGEEEEAQAATTDAPNGDLTPEMILSMMDR.

Met-1 is modified (N-acetylmethionine). Lys-18 is covalently cross-linked (Glycyl lysine isopeptide (Lys-Gly) (interchain with G-Cter in SUMO2)). A Glycyl lysine isopeptide (Lys-Gly) (interchain with G-Cter in SUMO) cross-link involves residue Lys-74. The interval 180-211 (QGELPPQEDSSWQKDPDYQPPAKKTKKTKKSK) is disordered. Residues 202 to 211 (KKTKKTKKSK) show a composition bias toward basic residues. A Glycyl lysine isopeptide (Lys-Gly) (interchain with G-Cter in SUMO2) cross-link involves residue Lys-219. The segment at 266–288 (FQCELCSYTCPRRSNLDRHMKSH) adopts a C2H2-type 1 zinc-finger fold. Thr-289 carries the post-translational modification Phosphothreonine. The C2H2-type 2 zinc-finger motif lies at 294–316 (HKCHLCGRAFRTVTLLRNHLNTH). Thr-317 carries the post-translational modification Phosphothreonine. 2 C2H2-type zinc fingers span residues 322–345 (HKCP…RYKH) and 351–373 (FKCS…IRSH). The residue at position 374 (Thr-374) is a Phosphothreonine. The segment at 379–401 (FQCSLCSYASRDTYKLKRHMRTH) adopts a C2H2-type 5 zinc-finger fold. Phosphoserine is present on Ser-402. 5 C2H2-type zinc fingers span residues 407-430 (YECY…LQKH), 437-460 (FHCP…RKQH), 467-489 (KKCR…QKSH), 495-517 (FKCD…KRTH), and 523-546 (YACS…KRYH). Residues 555-577 (FVCSKCGKTFTRRNTMARHADNC) form a C2H2-type 11; atypical zinc finger. The disordered stretch occupies residues 573-686 (HADNCAGPDG…TAIIQVEDQN (114 aa)). Residues 593–604 (KSKRGRKRKMRS) show a composition bias toward basic residues. A phosphoserine mark is found at Ser-609, Ser-610, and Ser-612. Acidic residues predominate over residues 610 to 637 (SDSEENAEPDLDDNEEEEEPAVEIEPEP). The segment covering 638–656 (EPQPQPPPPPQPVAPAPPP) has biased composition (pro residues). The span at 667-686 (RTNQPKQNQPTAIIQVEDQN) shows a compositional bias: polar residues. Lys-698 is covalently cross-linked (Glycyl lysine isopeptide (Lys-Gly) (interchain with G-Cter in SUMO); alternate). Lys-698 is covalently cross-linked (Glycyl lysine isopeptide (Lys-Gly) (interchain with G-Cter in SUMO2); alternate). Residues 699–726 (KEPDAEPAEGEEEEAQAATTDAPNGDLT) form a disordered region. The segment covering 703-713 (AEPAEGEEEEA) has biased composition (acidic residues).

This sequence belongs to the CTCF zinc-finger protein family. In terms of assembly, interacts with CHD8. Interacts with LLPH. Interacts with CENPE. Interacts with BRD2; promoting BRD2 recruitment to chromatin. Post-translationally, sumoylated on Lys-74 and Lys-698; sumoylation of CTCF contributes to the repressive function of CTCF on the MYC P2 promoter.

It localises to the nucleus. Its subcellular location is the nucleoplasm. It is found in the chromosome. The protein localises to the centromere. Chromatin binding factor that binds to DNA sequence specific sites and regulates the 3D structure of chromatin. Binds together strands of DNA, thus forming chromatin loops, and anchors DNA to cellular structures, such as the nuclear lamina. Defines the boundaries between active and heterochromatic DNA via binding to chromatin insulators, thereby preventing interaction between promoter and nearby enhancers and silencers. Plays a critical role in the epigenetic regulation. Participates in the allele-specific gene expression at the imprinted IGF2/H19 gene locus. On the maternal allele, binding within the H19 imprinting control region (ICR) mediates maternally inherited higher-order chromatin conformation to restrict enhancer access to IGF2. Mediates interchromosomal association between IGF2/H19 and WSB1/NF1 and may direct distant DNA segments to a common transcription factory. Regulates asynchronous replication of IGF2/H19. Plays a critical role in gene silencing over considerable distances in the genome. Preferentially interacts with unmethylated DNA, preventing spreading of CpG methylation and maintaining methylation-free zones. Inversely, binding to target sites is prevented by CpG methylation. Plays an important role in chromatin remodeling. Can dimerize when it is bound to different DNA sequences, mediating long-range chromatin looping. Causes local loss of histone acetylation and gain of histone methylation in the beta-globin locus, without affecting transcription. When bound to chromatin, it provides an anchor point for nucleosomes positioning. Seems to be essential for homologous X-chromosome pairing. May participate with Tsix in establishing a regulatable epigenetic switch for X chromosome inactivation. May play a role in preventing the propagation of stable methylation at the escape genes from X-inactivation. Involved in sister chromatid cohesion. Associates with both centromeres and chromosomal arms during metaphase and required for cohesin localization to CTCF sites. Plays a role in the recruitment of CENPE to the pericentromeric/centromeric regions of the chromosome during mitosis. Acts as a transcriptional repressor binding to promoters of vertebrate MYC gene and BAG1 gene. Also binds to the PLK and PIM1 promoters. Acts as a transcriptional activator of APP. Regulates APOA1/C3/A4/A5 gene cluster and controls MHC class II gene expression. Plays an essential role in oocyte and preimplantation embryo development by activating or repressing transcription. Seems to act as tumor suppressor. The sequence is that of Transcriptional repressor CTCF (Ctcf) from Mus musculus (Mouse).